Here is a 588-residue protein sequence, read N- to C-terminus: A-type ATP synthase subunit A (588 aa).

ATP is bound at residue Gly-237–Thr-244.

The protein belongs to the ATPase alpha/beta chains family. In terms of assembly, has multiple subunits with at least A(3), B(3), C, D, E, F, H, I and proteolipid K(x).

It is found in the cell membrane. The catalysed reaction is ATP + H2O + 4 H(+)(in) = ADP + phosphate + 5 H(+)(out). Component of the A-type ATP synthase that produces ATP from ADP in the presence of a proton gradient across the membrane. The A chain is the catalytic subunit. This Methanoregula boonei (strain DSM 21154 / JCM 14090 / 6A8) protein is A-type ATP synthase subunit A.